A 356-amino-acid chain; its full sequence is 4-hydroxy-2-oxovalerate aldolase (356 aa).

Positions 7–257 (PRVTDTTLRD…NPGLDVFKLM (251 aa)) constitute a Pyruvate carboxyltransferase domain. Residue 15-16 (RD) coordinates substrate. D16 is a Mn(2+) binding site. H19 acts as the Proton acceptor in catalysis. Residues S169 and H196 each coordinate substrate. Residues H196 and H198 each coordinate Mn(2+). Y287 lines the substrate pocket.

It belongs to the 4-hydroxy-2-oxovalerate aldolase family.

The catalysed reaction is (S)-4-hydroxy-2-oxopentanoate = acetaldehyde + pyruvate. The chain is 4-hydroxy-2-oxovalerate aldolase from Thermomicrobium roseum (strain ATCC 27502 / DSM 5159 / P-2).